The following is a 124-amino-acid chain: MSRYELTVQVRTRYLPEQSEPSQDQYAFAYTITIRNTGEVPSQLVSRHWVITDAESHVQEVAGLGVVGHQPLLPPGESFEYTSWATIKTPVGTMRGEYFCVAEDGHRFEAPIPEFALAMPRMLH.

Positions 1–124 (MSRYELTVQV…FALAMPRMLH (124 aa)) constitute an ApaG domain.

The polypeptide is Protein ApaG (Ralstonia nicotianae (strain ATCC BAA-1114 / GMI1000) (Ralstonia solanacearum)).